The following is a 67-amino-acid chain: Putative selenoprotein YdfZ (67 aa).

An S-selanylcysteine modification is found at Cys52.

This chain is Putative selenoprotein YdfZ (ydfZ), found in Escherichia coli O6:H1 (strain CFT073 / ATCC 700928 / UPEC).